The primary structure comprises 456 residues: RuvB-like helicase 1 (456 aa).

Residue 71-78 (GGAGTGKT) participates in ATP binding.

Belongs to the RuvB family. As to quaternary structure, may form heterododecamers with RVB2. Component of the SWR1 chromatin remodeling complex, the INO80 chromatin remodeling complex, and of the R2TP complex.

Its subcellular location is the nucleus. The enzyme catalyses ATP + H2O = ADP + phosphate + H(+). Its function is as follows. DNA helicase which participates in several chromatin remodeling complexes, including the SWR1 and the INO80 complexes. The SWR1 complex mediates the ATP-dependent exchange of histone H2A for the H2A variant HZT1 leading to transcriptional regulation of selected genes by chromatin remodeling. The INO80 complex remodels chromatin by shifting nucleosomes and is involved in DNA repair. Also involved in pre-rRNA processing. This is RuvB-like helicase 1 (rvb1) from Schizosaccharomyces pombe (strain 972 / ATCC 24843) (Fission yeast).